Reading from the N-terminus, the 124-residue chain is Small ribosomal subunit protein uS13 (124 aa).

Residues 94 to 124 (KGLPVRGQRTKTNARTRKGPKRTVAGKKKAR) are disordered.

It belongs to the universal ribosomal protein uS13 family. As to quaternary structure, part of the 30S ribosomal subunit. Forms a loose heterodimer with protein S19. Forms two bridges to the 50S subunit in the 70S ribosome.

Its function is as follows. Located at the top of the head of the 30S subunit, it contacts several helices of the 16S rRNA. In the 70S ribosome it contacts the 23S rRNA (bridge B1a) and protein L5 of the 50S subunit (bridge B1b), connecting the 2 subunits; these bridges are implicated in subunit movement. Contacts the tRNAs in the A and P-sites. The chain is Small ribosomal subunit protein uS13 from Pseudarthrobacter chlorophenolicus (strain ATCC 700700 / DSM 12829 / CIP 107037 / JCM 12360 / KCTC 9906 / NCIMB 13794 / A6) (Arthrobacter chlorophenolicus).